The following is a 168-amino-acid chain: GTP-dependent dephospho-CoA kinase (168 aa).

Residues Asp49, Ile50, Val51, Asp68, Lys70, and Glu120 each coordinate GTP.

Belongs to the GTP-dependent DPCK family.

The enzyme catalyses 3'-dephospho-CoA + GTP = GDP + CoA + H(+). It participates in cofactor biosynthesis; coenzyme A biosynthesis. Its function is as follows. Catalyzes the GTP-dependent phosphorylation of the 3'-hydroxyl group of dephosphocoenzyme A to form coenzyme A (CoA). This is GTP-dependent dephospho-CoA kinase from Pyrobaculum islandicum (strain DSM 4184 / JCM 9189 / GEO3).